A 384-amino-acid chain; its full sequence is MEDSPTMVKVDRGENQILSCRGRRCGFKVLGYVTGDMKEFANWLKDKPVVLQFMDWILRGISQVVFVSNPISGILILVGLLVQNPWWALCGCVGTVVSTLTALLLSQDRSAIAAGLQGYNATLVGILMAVFSNKGDYFWWLIFPVSAMSMTCPVFSSALSSVLSKWDLPVFTLPFNMALSMYLSATGHYNTFFPSKLFTPVSSVPNITWSELSALELLKSLPVGVGQIYGCDNPWTGGIFLCAILLSSPLMCLHAAIGSLLGVIAGLSLAAPFEDIYFGLWGFNSSLACIAIGGMFMALTWQTHLLALACALFTAYFGACMAHLMAVVHLPACTWSFCLATLLFLLLTTKNPNIYRMPLSKVTYSEENRIFYLQNKKRMVESPL.

Glu-39 is subject to Phosphoserine. 5 helical membrane-spanning segments follow: residues 61–81, 85–105, 111–131, 138–158, and 168–188; these read ISQVVFVSNPISGILILVGLL, PWWALCGCVGTVVSTLTALLL, AIAAGLQGYNATLVGILMAVF, FWWLIFPVSAMSMTCPVFSSA, and LPVFTLPFNMALSMYLSATGH. Asn-206 carries N-linked (GlcNAc...) asparagine glycosylation. Transmembrane regions (helical) follow at residues 250–270, 276–296, 305–325, and 327–347; these read LMCLHAAIGSLLGVIAGLSLA, IYFGLWGFNSSLACIAIGGMF, LLALACALFTAYFGACMAHLM, and VVHLPACTWSFCLATLLFLLL.

This sequence belongs to the urea transporter family. In terms of assembly, homotrimer; each subunit contains a pore through which urea permeates. Identified in a complex with STOM. In terms of processing, N-glycosylated in red blood cells, as well as in most non-erythroid tissues, except in the gastrocnemius muscle and in the gastrointestinal tract, including liver, colon and stomach. In terms of tissue distribution, expressed in brain, kidney, heart, liver, lung, skeletal muscle, spleen, testis, ureter and urinary bladder (at protein level). Along the gastrointestinal tract, detected in colon, jejunum and stomach (at protein level). In the kidney, expressed in some microvessels of the inner and outer medulla, but not all (at protein level). Not detected in the cortex (at protein level). Detected in the urothelium all along the urinary tract, including the papilla surface, the ureter, the bladder and the urethra (at protein level). In the brain, expressed at the border of the corpus callosum and striatum in astrocytic cellular processes surrounding blood microvessels (at protein level). Detected in erythrocytes (at protein level).

Its subcellular location is the cell membrane. The protein resides in the basolateral cell membrane. It catalyses the reaction urea(in) = urea(out). Its function is as follows. Mediates the transport of urea driven by a concentration gradient across the cell membranes of erythrocytes and the renal inner medullary collecting duct which is critical to the urinary concentrating mechanism. Facilitates water transport in erythrocytes. This chain is Urea transporter 1 (Slc14a1), found in Mus musculus (Mouse).